The following is a 145-amino-acid chain: Ribosome-binding factor A (145 aa).

The segment covering 122-132 has biased composition (basic and acidic residues); the sequence is KVQRDLESAPR. The interval 122 to 145 is disordered; sequence KVQRDLESAPREDDEGEPDSSSRD.

This sequence belongs to the RbfA family. As to quaternary structure, monomer. Binds 30S ribosomal subunits, but not 50S ribosomal subunits or 70S ribosomes.

The protein localises to the cytoplasm. One of several proteins that assist in the late maturation steps of the functional core of the 30S ribosomal subunit. Associates with free 30S ribosomal subunits (but not with 30S subunits that are part of 70S ribosomes or polysomes). Required for efficient processing of 16S rRNA. May interact with the 5'-terminal helix region of 16S rRNA. This is Ribosome-binding factor A from Methylorubrum extorquens (strain PA1) (Methylobacterium extorquens).